Consider the following 155-residue polypeptide: Putative pre-16S rRNA nuclease (155 aa).

The protein belongs to the YqgF nuclease family.

Its subcellular location is the cytoplasm. Could be a nuclease involved in processing of the 5'-end of pre-16S rRNA. The protein is Putative pre-16S rRNA nuclease of Xylella fastidiosa (strain M12).